Here is a 145-residue protein sequence, read N- to C-terminus: Small ribosomal subunit protein eS19 (145 aa).

It belongs to the eukaryotic ribosomal protein eS19 family. As to quaternary structure, component of the small ribosomal subunit.

It localises to the cytoplasm. Its subcellular location is the nucleus. Its function is as follows. Component of the small ribosomal subunit. The ribosome is a large ribonucleoprotein complex responsible for the synthesis of proteins in the cell. Required for pre-rRNA processing and maturation of 40S ribosomal subunits. In Myxine glutinosa (Atlantic hagfish), this protein is Small ribosomal subunit protein eS19 (rps19).